Here is a 340-residue protein sequence, read N- to C-terminus: Ketol-acid reductoisomerase (NADP(+)) (340 aa).

The region spanning 3–182 is the KARI N-terminal Rossmann domain; sequence VTMYYEEDVE…GCARVGIIET (180 aa). NADP(+)-binding positions include 26–29, R49, S53, and 83–86; these read YGSQ and DELQ. H108 is a catalytic residue. G134 is a binding site for NADP(+). A KARI C-terminal knotted domain is found at 183–328; the sequence is TFKEETEEDL…AELRKAMPFT (146 aa). D191, E195, E227, and E231 together coordinate Mg(2+). S252 lines the substrate pocket.

It belongs to the ketol-acid reductoisomerase family. Mg(2+) is required as a cofactor.

The enzyme catalyses (2R)-2,3-dihydroxy-3-methylbutanoate + NADP(+) = (2S)-2-acetolactate + NADPH + H(+). It catalyses the reaction (2R,3R)-2,3-dihydroxy-3-methylpentanoate + NADP(+) = (S)-2-ethyl-2-hydroxy-3-oxobutanoate + NADPH + H(+). Its pathway is amino-acid biosynthesis; L-isoleucine biosynthesis; L-isoleucine from 2-oxobutanoate: step 2/4. The protein operates within amino-acid biosynthesis; L-valine biosynthesis; L-valine from pyruvate: step 2/4. Functionally, involved in the biosynthesis of branched-chain amino acids (BCAA). Catalyzes an alkyl-migration followed by a ketol-acid reduction of (S)-2-acetolactate (S2AL) to yield (R)-2,3-dihydroxy-isovalerate. In the isomerase reaction, S2AL is rearranged via a Mg-dependent methyl migration to produce 3-hydroxy-3-methyl-2-ketobutyrate (HMKB). In the reductase reaction, this 2-ketoacid undergoes a metal-dependent reduction by NADPH to yield (R)-2,3-dihydroxy-isovalerate. This Lactococcus lactis subsp. cremoris (strain SK11) protein is Ketol-acid reductoisomerase (NADP(+)).